The chain runs to 372 residues: DNA-directed RNA polymerase subunit alpha (372 aa).

Residues 1–268 (MIFDEDSNSI…DQFQPFINFD (268 aa)) are alpha N-terminal domain (alpha-NTD). An alpha C-terminal domain (alpha-CTD) region spans residues 280 to 372 (KDTLPYDSNL…ESLSKQYSEE (93 aa)).

Belongs to the RNA polymerase alpha chain family. As to quaternary structure, homodimer. The RNAP catalytic core consists of 2 alpha, 1 beta, 1 beta' and 1 omega subunit. When a sigma factor is associated with the core the holoenzyme is formed, which can initiate transcription.

The enzyme catalyses RNA(n) + a ribonucleoside 5'-triphosphate = RNA(n+1) + diphosphate. DNA-dependent RNA polymerase catalyzes the transcription of DNA into RNA using the four ribonucleoside triphosphates as substrates. The chain is DNA-directed RNA polymerase subunit alpha from Ehrlichia chaffeensis (strain ATCC CRL-10679 / Arkansas).